Here is a 248-residue protein sequence, read N- to C-terminus: Coproheme decarboxylase (248 aa).

Residues Arg130, 144-148, His171, Gln184, and Ser222 each bind Fe-coproporphyrin III; that span reads YPMDK. Residue Tyr144 is part of the active site.

Belongs to the ChdC family. Type 1 subfamily. The cofactor is Fe-coproporphyrin III.

The enzyme catalyses Fe-coproporphyrin III + 2 H2O2 + 2 H(+) = heme b + 2 CO2 + 4 H2O. The catalysed reaction is Fe-coproporphyrin III + H2O2 + H(+) = harderoheme III + CO2 + 2 H2O. It catalyses the reaction harderoheme III + H2O2 + H(+) = heme b + CO2 + 2 H2O. It functions in the pathway porphyrin-containing compound metabolism; protoheme biosynthesis. Involved in coproporphyrin-dependent heme b biosynthesis. Catalyzes the decarboxylation of Fe-coproporphyrin III (coproheme) to heme b (protoheme IX), the last step of the pathway. The reaction occurs in a stepwise manner with a three-propionate intermediate. The protein is Coproheme decarboxylase of Geobacillus thermodenitrificans (strain NG80-2).